A 685-amino-acid chain; its full sequence is UvrABC system protein B (685 aa).

Positions 39–420 constitute a Helicase ATP-binding domain; it reads EGIGDGLMYQ…TYEAEHQGQV (382 aa). 52–59 contributes to the ATP binding site; it reads GVTGSGKT. The short motif at 105-128 is the Beta-hairpin element; that stretch reads YYDYYQPEAYVPSRDLFIEKDSSI. Positions 443-596 constitute a Helicase C-terminal domain; the sequence is QVDDLLSEAK…QIAFNQANGI (154 aa). The UVR domain occupies 640-675; that stretch reads AKSIRKLEKEMQEHARNLEFEKAAAARDELFRLRQR.

The protein belongs to the UvrB family. As to quaternary structure, forms a heterotetramer with UvrA during the search for lesions. Interacts with UvrC in an incision complex.

The protein resides in the cytoplasm. Functionally, the UvrABC repair system catalyzes the recognition and processing of DNA lesions. A damage recognition complex composed of 2 UvrA and 2 UvrB subunits scans DNA for abnormalities. Upon binding of the UvrA(2)B(2) complex to a putative damaged site, the DNA wraps around one UvrB monomer. DNA wrap is dependent on ATP binding by UvrB and probably causes local melting of the DNA helix, facilitating insertion of UvrB beta-hairpin between the DNA strands. Then UvrB probes one DNA strand for the presence of a lesion. If a lesion is found the UvrA subunits dissociate and the UvrB-DNA preincision complex is formed. This complex is subsequently bound by UvrC and the second UvrB is released. If no lesion is found, the DNA wraps around the other UvrB subunit that will check the other stand for damage. In Aromatoleum aromaticum (strain DSM 19018 / LMG 30748 / EbN1) (Azoarcus sp. (strain EbN1)), this protein is UvrABC system protein B.